The sequence spans 785 residues: AP-1 complex subunit gamma-like 2 (785 aa).

The tract at residues 369-379 (LSLALVNSSNV) is essential for ubiquitin-binding. The segment at 592–617 (GPQADEEAKESKEAAQLSEAAPVPTE) is disordered. The 116-residue stretch at 665–780 (APIPDLKVFE…QEIFEVNNLP (116 aa)) folds into the GAE domain.

The protein belongs to the adaptor complexes large subunit family. In terms of assembly, may interact with AP1S1/Sigma1A-adaptin and AP1S2/Sigma1B-adaptin. Probably does not interact with APB1. Interacts (via GAE domain) with RABEP1, NECAP1, CLINT1 and AFTPH/aftiphilin. As to quaternary structure, (Microbial infection) Interacts with HBV major surface antigen L. Interacts with HBV core protein C in a ubiquitin-dependent manner. In terms of tissue distribution, expressed in all but one (skeletal muscle) tissues examined.

Its subcellular location is the golgi apparatus membrane. It localises to the cytoplasmic vesicle membrane. It is found in the endosome membrane. In terms of biological role, may function in protein sorting in late endosomes or multivesucular bodies (MVBs). Its function is as follows. (Microbial infection) Involved in MVB-assisted maturation of hepatitis B virus (HBV). The protein is AP-1 complex subunit gamma-like 2 (AP1G2) of Homo sapiens (Human).